Here is a 210-residue protein sequence, read N- to C-terminus: Small ribosomal subunit protein uS5 (210 aa).

Residues 1 to 11 (MTQPNTQTTPN) are compositionally biased toward polar residues. The tract at residues 1–56 (MTQPNTQTTPNDVPAAAEGQHQEQQQQQRRGGGRERRGGGRRGDRRGQERDSEWQE) is disordered. Residues 18-29 (EGQHQEQQQQQR) show a composition bias toward low complexity. The span at 32-56 (GGRERRGGGRRGDRRGQERDSEWQE) shows a compositional bias: basic and acidic residues. An S5 DRBM domain is found at 54–117 (WQERVVQIRR…ADGKKHLVKV (64 aa)).

This sequence belongs to the universal ribosomal protein uS5 family. Part of the 30S ribosomal subunit. Contacts proteins S4 and S8.

Functionally, with S4 and S12 plays an important role in translational accuracy. Located at the back of the 30S subunit body where it stabilizes the conformation of the head with respect to the body. The chain is Small ribosomal subunit protein uS5 from Prochlorococcus marinus (strain MIT 9303).